The following is a 671-amino-acid chain: Acetyl-coenzyme A synthetase (671 aa).

Positions Met-1–Gly-21 are disordered. CoA contacts are provided by residues Arg-221–Lys-224, Thr-339, and Asn-363. ATP is bound by residues Gly-415–Gly-417, Asp-439–Thr-444, Asp-528, and Arg-543. CoA is bound at residue Ser-551. Arg-554 lines the ATP pocket. Mg(2+) contacts are provided by Val-565, His-567, and Val-570. A CoA-binding site is contributed by Arg-611. Lys-636 carries the post-translational modification N6-acetyllysine.

This sequence belongs to the ATP-dependent AMP-binding enzyme family. Requires Mg(2+) as cofactor. Acetylated. Deacetylation by the SIR2-homolog deacetylase activates the enzyme.

It catalyses the reaction acetate + ATP + CoA = acetyl-CoA + AMP + diphosphate. Catalyzes the conversion of acetate into acetyl-CoA (AcCoA), an essential intermediate at the junction of anabolic and catabolic pathways. AcsA undergoes a two-step reaction. In the first half reaction, AcsA combines acetate with ATP to form acetyl-adenylate (AcAMP) intermediate. In the second half reaction, it can then transfer the acetyl group from AcAMP to the sulfhydryl group of CoA, forming the product AcCoA. The protein is Acetyl-coenzyme A synthetase of Rhodopirellula baltica (strain DSM 10527 / NCIMB 13988 / SH1).